Reading from the N-terminus, the 104-residue chain is Flagellar hook-basal body complex protein FliE (104 aa).

The protein belongs to the FliE family.

The protein resides in the bacterial flagellum basal body. The protein is Flagellar hook-basal body complex protein FliE of Salmonella typhi.